The primary structure comprises 186 residues: Interferon lambda-3 (186 aa).

The signal sequence occupies residues 1 to 21; the sequence is MVCYGVTIILVGTLGSLLVGA. 3 cysteine pairs are disulfide-bonded: C31/C128, C65/C160, and C178/C185.

Belongs to the lambda interferon family.

The protein localises to the secreted. Its function is as follows. Cytokine which plays a critical role in the antiviral host defense, predominantly in the epithelial tissues. Acts as a ligand for the heterodimeric class II cytokine receptor composed of IL10RB and IFNLR1, and receptor engagement leads to the activation of the JAK/STAT signaling pathway resulting in the expression of IFN-stimulated genes (ISG), which mediate the antiviral state. Has a restricted receptor distribution and therefore restricted targets: is primarily active in epithelial cells and this cell type-selective action is because of the epithelial cell-specific expression of its receptor IFNLR1. Exhibits antiviral activity against the H5N1 influenza A virus. Induces the expression of the antiviral MX protein in epithelial-rich tissues, such as intestine, trachea and lung. This chain is Interferon lambda-3 (IFNL3), found in Gallus gallus (Chicken).